A 199-amino-acid polypeptide reads, in one-letter code: Pyridoxine/pyridoxamine 5'-phosphate oxidase (199 aa).

Residues 44–49 (RTVLLK), 59–60 (YT), K66, and Q91 contribute to the FMN site. K49 contributes to the substrate binding site. Substrate is bound by residues Y109, R113, and S117. FMN contacts are provided by residues 126–127 (QS) and W171. Substrate is bound at residue 177–179 (RLH). R181 lines the FMN pocket.

This sequence belongs to the pyridoxamine 5'-phosphate oxidase family. As to quaternary structure, homodimer. FMN is required as a cofactor.

The enzyme catalyses pyridoxamine 5'-phosphate + O2 + H2O = pyridoxal 5'-phosphate + H2O2 + NH4(+). It carries out the reaction pyridoxine 5'-phosphate + O2 = pyridoxal 5'-phosphate + H2O2. It functions in the pathway cofactor metabolism; pyridoxal 5'-phosphate salvage; pyridoxal 5'-phosphate from pyridoxamine 5'-phosphate: step 1/1. Its pathway is cofactor metabolism; pyridoxal 5'-phosphate salvage; pyridoxal 5'-phosphate from pyridoxine 5'-phosphate: step 1/1. Catalyzes the oxidation of either pyridoxine 5'-phosphate (PNP) or pyridoxamine 5'-phosphate (PMP) into pyridoxal 5'-phosphate (PLP). The sequence is that of Pyridoxine/pyridoxamine 5'-phosphate oxidase from Xanthomonas campestris pv. campestris (strain 8004).